The sequence spans 311 residues: Ribosomal RNA small subunit methyltransferase H (311 aa).

Residues 32-34, D52, F79, D100, and Q107 each bind S-adenosyl-L-methionine; that span reads AGH.

It belongs to the methyltransferase superfamily. RsmH family.

The protein localises to the cytoplasm. The catalysed reaction is cytidine(1402) in 16S rRNA + S-adenosyl-L-methionine = N(4)-methylcytidine(1402) in 16S rRNA + S-adenosyl-L-homocysteine + H(+). Its function is as follows. Specifically methylates the N4 position of cytidine in position 1402 (C1402) of 16S rRNA. The chain is Ribosomal RNA small subunit methyltransferase H from Staphylococcus aureus (strain COL).